The primary structure comprises 518 residues: MGYDQTRKLSDEYEISEILGRGGFSVVRKGTKKSGNEKTQVAIKTLRRLGSSPSGTGGGQKSTATVMGFPSLRQVSVSDALLTNEILVMRRIVENVSPHPNVIDLYDVCEDSNGVHLVLELCSGGELFDRIVAQDKYAETEAAAVVRQIAAGLEAVHKADIVHRDLKPENCLFLDSRKDSPLKIMDFGLSSVEEFTDPVVGLFGSIDYVSPEALSQGKITAKSDMWSLGVILYILLSGYPPFIAQNNRQKQQMIINGNFSFYEKTWKGITQSAKQLISSLLTVDPSKRPSAQELLSHPWVRGDKAKDEQMDPEIVSRLQSFNARRKLRAAAIASVWSSTIFLRTKKLRSLVGTYDLKEEEIESLRIHFKKICGNGDNATLSEFVEVLKAMKMPSLIPLAPRIFDLFDNNRDGTIDMREILCGFSSLKNSKGDDALRLCFQMYDTDRSGCITKEEVASMLCALPEECLPADITEPGKLDEIFDLMDANSDGKVTFEEFKAAMQRDSSLQDMLLSSLRPS.

Residues 13–300 (YEISEILGRG…AQELLSHPWV (288 aa)) form the Protein kinase domain. ATP is bound by residues 19–27 (LGRGGFSVV) and Lys44. The active-site Proton acceptor is Asp165. The residue at position 265 (Thr265) is a Phosphothreonine. Positions 323–336 (ARRKLRAAAIASVW) are calmodulin-binding. Residues 344 to 365 (TKKLRSLVGTYDLKEEEIESLR) are a coiled coil. EF-hand domains lie at 394 to 429 (SLIP…LKNS), 430 to 465 (KGDD…LPEE), and 472 to 507 (TEPG…DSSL). The Ca(2+) site is built by Asp407, Asn409, Asp411, Thr413, Glu418, Asp443, Asp445, Ser447, Cys449, Glu454, Asp485, Asn487, Asp489, Lys491, and Glu496.

The protein belongs to the protein kinase superfamily. CAMK Ser/Thr protein kinase family. CaMK subfamily. Interacts with IPD3. Interacts with CIP73. In terms of processing, autophosphorylation stimulated by calcium. Occurs probably by an intermolecular mechanism. As to expression, mainly expressed in roots and nodules. Detected in leaves, stems and cotyledons.

It localises to the nucleus. The enzyme catalyses L-seryl-[protein] + ATP = O-phospho-L-seryl-[protein] + ADP + H(+). It catalyses the reaction L-threonyl-[protein] + ATP = O-phospho-L-threonyl-[protein] + ADP + H(+). Its activity is regulated as follows. Activated by calcium/calmodulin binding after calcium-induced autophosphorylation. Its function is as follows. Calcium- and calmodulin-dependent protein kinase necessary and sufficient for dedifferentiation of root cortical cells into nodule initials. Not required for calcium spiking. Acts as central regulator of the nodule organogenesis program. Required for root hair curling and infection thread (IT) formation upon rhizobial infection, and arbuscule formation during arbuscular mycorrhiza (AM) fungal infection. Phosphorylates the downstream target IPD3, a protein required for root infection by symbiotic rhizobia and AM fungi. Phosphorylates the downstream target CIP73, a protein required for root nodule organogenesis. Mediates the phosphorylation of leghemoglobins (e.g. LB1) to modulate their oxygen O(2) affinity, thus regulating the diffusion of oxygen to the bacteroids in nodules. The protein is Calcium and calcium/calmodulin-dependent serine/threonine-protein kinase of Lotus japonicus (Lotus corniculatus var. japonicus).